The primary structure comprises 407 residues: Zinc finger protein 260 (407 aa).

Disordered regions lie at residues 1-21 (MLESLQPESHLLHDEPDPGES), 39-72 (VEHKKTHSGEKSPECTGCGEESSQASSLTLHLRS), and 96-124 (SHQKQHTEERPSESKKTPVPMTTTVRNQR). A C2H2-type 1 zinc finger spans residues 23–45 (YECNECKETFSLEQNFVEHKKTH). 2 stretches are compositionally biased toward basic and acidic residues: residues 39-51 (VEHKKTHSGEKSP) and 100-111 (QHTEERPSESKK). The C2H2-type 2; degenerate zinc finger occupies 51-73 (PECTGCGEESSQASSLTLHLRSR). A C2H2-type 3 zinc finger spans residues 79–101 (YKCGECGKAFSQRGNFLSHQKQH). The segment covering 115–124 (PMTTTVRNQR) has biased composition (polar residues). 10 consecutive C2H2-type zinc fingers follow at residues 131-153 (YACKECGKAFNGKSYLKEHEKIH), 159-181 (FECSQCGRAFSQKQYLIKHQNIH), 187-209 (FKCNECGKAFSQKENLIIHQRIH), 215-237 (YECKGCGKAFIQKSSLIRHQRSH), 243-265 (YTCKECGKAFSGKSNLTEHEKIH), 271-293 (YKCNECGTIFRQKQYLIKHHNIH), 299-321 (YECNKCGKAFSRITSLIVHVRIH), 327-349 (YECKICGKAFCQSSSLTVHMRSH), 355-377 (YGCNECGKAFSQFSTLALHMRIH), and 383-405 (YQCSECGKAFSQKSHHIRHQRIH).

This sequence belongs to the krueppel C2H2-type zinc-finger protein family. In terms of assembly, binds DNA. Interacts with GATA4. As to expression, predominantly present in heart. Outside the heart, it is detected in embryonic and postnatal vascular smooth muscle cells and in epithelial cells of the lung, gut and kidney at sites of epithelial morphogenesis and in the spinal cord (at protein level).

Its subcellular location is the nucleus. In terms of biological role, transcription factor that acts as a cardiac regulator and an effector of alpha1-adrenergic signaling. Binds to PE response elements (PERE) present in the promoter of genes such as ANF/NPPA and acts as a direct transcriptional activator of NPPA. Also acts as a cofactor with GATA4, a key cardiac regulator. The sequence is that of Zinc finger protein 260 (Znf260) from Mus musculus (Mouse).